The sequence spans 692 residues: Transforming growth factor beta activator LRRC33 (692 aa).

The N-terminal stretch at 1-18 is a signal peptide; that stretch reads MELLPLWLCLGFHFLTVG. At 19–650 the chain is on the extracellular side; the sequence is WRNRSGTATA…CKWERLDLGL (632 aa). Asn21 carries an N-linked (GlcNAc...) asparagine glycan. Residues 29–56 form the LRRNT domain; that stretch reads ASQGVCKLVGGAADCRGQSLASVPSSLP. 10 LRR repeats span residues 58–79, 82–103, 106–127, 133–155, 158–179, 182–203, 206–227, 228–239, 251–272, and 273–294; these read HARM…SLQP, LLES…AFQE, HLRS…TAAA, GLRR…MLQN, SLRS…VFEG, RLRE…AFDG, ELRH…GLTR, LRVLNVSYNVLE, ELET…PQYS, and KLRT…YNTS. N-linked (GlcNAc...) asparagine glycosylation is present at Asn74. Asn155 carries an N-linked (GlcNAc...) asparagine glycan. An N-linked (GlcNAc...) asparagine glycan is attached at Asn232. Asn292, Asn309, and Asn312 each carry an N-linked (GlcNAc...) asparagine glycan. LRR repeat units lie at residues 329–350, 353–374, 377–398, 403–424, 427–447, 463–484, 486–507, 512–534, 537–558, 559–580, and 585–594; these read DLRF…FLRK, SLSH…EHEP, ALTE…PGLA, SLRL…LFAN, NITT…PAAS, SLRS…PFQG, SLTY…APLQ, MLQV…DFSG, NLRD…GGSL, ALET…AVSE, and GLRTIYLSQN. N-linked (GlcNAc...) asparagine glycans are attached at residues Asn408 and Asn427. Asn500 carries N-linked (GlcNAc...) asparagine glycosylation. An LRRCT domain is found at 595–643; the sequence is PYDCCGVDGWGALQHGQTVADWAMVTCNLSSKIIRVTELPGGVPRDCKW. Asn622 is a glycosylation site (N-linked (GlcNAc...) asparagine). The helical transmembrane segment at 651 to 671 threads the bilayer; sequence LYLVLILPSCLTLLVACTVIV. Residues 672 to 692 lie on the Cytoplasmic side of the membrane; sequence LTFKKPLLQVIKSRCHWSSVY.

The protein belongs to the LRRC32/LRRC33 family. In terms of assembly, interacts with TGFB1; associates via disulfide bonds with the Latency-associated peptide chain (LAP) regulatory chain of TGFB1, leading to regulate activation of TGF-beta-1. Interacts (via LRR repeats) with TLR2, TLR3, TLR4, TLR9 and probably other Toll-like receptors. Interacts with CYBB/NOX2; the interaction is direct. In terms of tissue distribution, mainly expressed in cells of hematopoietic origin. Highly expressed in bone marrow, thymus, liver, lung, intestine and spleen. In the brain, highly expressed in microglia.

Its subcellular location is the cell membrane. It is found in the endoplasmic reticulum membrane. Functionally, key regulator of transforming growth factor beta-1 (TGFB1) specifically required for microglia function in the nervous system. Required for activation of latent TGF-beta-1 in macrophages and microglia: associates specifically via disulfide bonds with the Latency-associated peptide (LAP), which is the regulatory chain of TGFB1, and regulates integrin-dependent activation of TGF-beta-1. TGF-beta-1 activation mediated by LRRC33/NRROS is highly localized: there is little spreading of TGF-beta-1 activated from one microglial cell to neighboring microglia, suggesting the existence of localized and selective activation of TGF-beta-1 by LRRC33/NRROS. Indirectly plays a role in Toll-like receptor (TLR) signaling: ability to inhibit TLR-mediated NF-kappa-B activation and cytokine production is probably a consequence of its role in TGF-beta-1 signaling. In Homo sapiens (Human), this protein is Transforming growth factor beta activator LRRC33.